We begin with the raw amino-acid sequence, 200 residues long: Arylesterase (200 aa).

The N-terminal stretch at 1 to 19 (MIRLLSLVLFFCLSAASQA) is a signal peptide. Serine 29 (nucleophile) is an active-site residue. Residues aspartate 176 and histidine 179 contribute to the active site.

Belongs to the 'GDSL' lipolytic enzyme family. As to quaternary structure, homodimer.

It carries out the reaction a phenyl acetate + H2O = a phenol + acetate + H(+). In terms of biological role, favors the hydrolysis of several arylesters. This is Arylesterase from Vibrio mimicus.